A 552-amino-acid polypeptide reads, in one-letter code: uncharacterized protein (552 aa).

Positions 8 to 200 (KLFADMIIQG…LLCVYEGFLK (193 aa)) constitute a DhaL domain.

This is an uncharacterized protein from Staphylococcus haemolyticus (strain JCSC1435).